We begin with the raw amino-acid sequence, 154 residues long: Transcriptional repressor NrdR (154 aa).

Residues 3-34 fold into a zinc finger; it reads CPFCRHPDSRVIDSRETDEGQAIRRRRSCPEC. The 91-residue stretch at 46 to 136 folds into the ATP-cone domain; sequence LAVVKRSGVT…VYRSFESADD (91 aa).

The protein belongs to the NrdR family. It depends on Zn(2+) as a cofactor.

Negatively regulates transcription of bacterial ribonucleotide reductase nrd genes and operons by binding to NrdR-boxes. This Mycobacterium avium (strain 104) protein is Transcriptional repressor NrdR.